Here is a 1121-residue protein sequence, read N- to C-terminus: Phosphatidylinositol 4-kinase beta 1 (1121 aa).

The region spanning 1 to 143 (MPMGRFLSLV…SRIQEKCQIA (143 aa)) is the PIK helical domain. Polar residues predominate over residues 187–207 (PPTQKSLSFSPSPGTNVQDDG). The segment at 187-210 (PPTQKSLSFSPSPGTNVQDDGSQL) is disordered. Tandem repeats lie at residues 212 to 231 (AEDN…RDAL), 244 to 263 (SEKE…EGDE), 266 to 285 (PNSE…EDED), 288 to 306 (NSSE…ESEE), 309 to 328 (SSSD…DEEE), 331 to 350 (ANSD…EDEE), 353 to 372 (PNSE…EDDK), 380 to 398 (EDKD…DDKR), and 420 to 438 (DERE…DDKK). Residues 212–508 (AEDNKIFKKL…FRDRDQSVED (297 aa)) are 11 X 20 AA approximate repeats (PPC). Disordered stretches follow at residues 343 to 421 (ESKN…EEDE), 435 to 489 (DDKK…ESSP), 506 to 544 (VEDS…NTAS), and 794 to 825 (AAAA…NGGM). Composition is skewed to basic and acidic residues over residues 358 to 376 (FFKK…VPKE), 383 to 405 (DGFL…EKNE), 412 to 421 (ADKKSGEEDE), and 435 to 445 (DDKKDIVKVDD). Residues 446 to 455 (GNESEGDESP) are compositionally biased toward acidic residues. Phosphoserine is present on residues Ser-449 and Ser-454. 2 repeat units span residues 454–472 (SPEF…EDAK) and 489–508 (PGTE…SVED). Residues 466-475 (IHPEDAKPTS) show a composition bias toward basic and acidic residues. Over residues 476-489 (ENENSSNGLVESSP) the composition is skewed to polar residues. A PI3K/PI4K catalytic domain is found at 835 to 1106 (ELWEGKRDRI…LISSSLDAWR (272 aa)). Residues 841-847 (RDRIRKA) are G-loop. A catalytic loop region spans residues 969–977 (QVKDRHNGN). The segment at 988–1012 (HIDFGFMLSNSPGGVNFESAPFKLT) is activation loop.

This sequence belongs to the PI3/PI4-kinase family. Type III PI4K subfamily. Interacts with AHK2, CBL1 and RABA4D. In terms of tissue distribution, expressed constitutively in leaves, roots, flowers, and stems.

It localises to the cell membrane. The protein localises to the golgi apparatus. Its subcellular location is the trans-Golgi network. The protein resides in the cytoplasmic vesicle membrane. It carries out the reaction a 1,2-diacyl-sn-glycero-3-phospho-(1D-myo-inositol) + ATP = a 1,2-diacyl-sn-glycero-3-phospho-(1D-myo-inositol 4-phosphate) + ADP + H(+). With respect to regulation, stimulated by phosphatidylinositol 4-phosphate (PtdIns4P). Slightly repressed by phosphatidyl-choline (PtdCho), wortmannin and adenosine. Acts on phosphatidylinositol (PtdIns) in the first committed step in the production of the second messenger inositol-1,4,5-trisphosphate. Necessary for proper organization of the trans-Golgi network (TGN) and post-Golgi secretion in root hairs. Together with PI4KB2, required during polarized root hair expansion and pollen tube elongation. Functions redundantly with PI4KB2 upstream of the cold response phosphoinositide-dependent phospholipase C (PI-PLC) pathway. This Arabidopsis thaliana (Mouse-ear cress) protein is Phosphatidylinositol 4-kinase beta 1.